The primary structure comprises 801 residues: Triacylglycerol lipase SDP1L (801 aa).

Residue N130 is glycosylated (N-linked (GlcNAc...) asparagine). The next 2 helical transmembrane spans lie at 232-249 (ALLL…LGVV) and 261-277 (IIAG…VVGT). The region spanning 233 to 436 (LLLSGGASLG…EMDLPMIQLK (204 aa)) is the PNPLA domain. A GXSXG motif is present at residues 264-268 (GSSVG). S266 acts as the Nucleophile in catalysis. Residues N328 and N332 are each glycosylated (N-linked (GlcNAc...) asparagine). The Proton acceptor role is filled by D423. N-linked (GlcNAc...) asparagine glycans are attached at residues N605, N620, N649, N653, N708, and N759. The segment at 648 to 675 (SNRTSNLSHTYDAGSECDSPEAEDWTRS) is disordered. Residues 750-801 (MNSEPEDSQNESEIPETPESVQLDSPEKDIIDGESSASEDGDAQANLIHDHE) are disordered. A compositionally biased stretch (acidic residues) spans 753–765 (EPEDSQNESEIPE).

In terms of tissue distribution, highly expressed in mature pollen.

It localises to the lipid droplet. It is found in the membrane. The enzyme catalyses a triacylglycerol + H2O = a diacylglycerol + a fatty acid + H(+). Its function is as follows. May be involved in the release of fatty acids from the oil body in germinating seedlings. Can hydrolyze triacylglycerols in vitro. In Arabidopsis thaliana (Mouse-ear cress), this protein is Triacylglycerol lipase SDP1L.